The following is a 269-amino-acid chain: Malonyl-[acyl-carrier protein] O-methyltransferase (269 aa).

The protein belongs to the methyltransferase superfamily.

The catalysed reaction is malonyl-[ACP] + S-adenosyl-L-methionine = malonyl-[ACP] methyl ester + S-adenosyl-L-homocysteine. The protein operates within cofactor biosynthesis; biotin biosynthesis. Functionally, converts the free carboxyl group of a malonyl-thioester to its methyl ester by transfer of a methyl group from S-adenosyl-L-methionine (SAM). It allows to synthesize pimeloyl-ACP via the fatty acid synthetic pathway. The protein is Malonyl-[acyl-carrier protein] O-methyltransferase of Bacillus cereus (strain ATCC 14579 / DSM 31 / CCUG 7414 / JCM 2152 / NBRC 15305 / NCIMB 9373 / NCTC 2599 / NRRL B-3711).